The following is a 462-amino-acid chain: MDDFVRVGGLGAVSAALPRALRPFADIRIMLPGYRDIIEQLTHIQIVGRCPSFADLPACSLGRAATKDGLPVYVLLCSQLYDRPGNPYGDESGRDWPDNDIRFARFASAAAELAMGKLDKNWAADLIHANDWQASLVPAYLAWRGAKLPSILTIHNLAYQGLFPKDSLRRIGAPESAFHIDGLEFYDQVSFLKAGLVYASHLTTVSGTYAREITTAEFGCGLEGLLRLRSDAAELTGILNGIDESWDPRSCAQLAQQFGAGDWVGKKANADYVRKQFGLAVSRGPMFGIVARLVHQKGIDLVLSAADEIIDAGGQIVVTGSGEPALEQALIDAHRRRPDAIGVAIGFNDAQARRIFAGSDFTLMPSRFEPCGLSQMYAQRFGSLPIGHQTGGLAETITDGETGFLFSRPSHESFLGGVRRAFEAFMAQDQLDSMRRSAMGRSFSWSISADSYSALYRKLAAV.

Arginine 6 contributes to the ADP-alpha-D-glucose binding site.

This sequence belongs to the glycosyltransferase 1 family. Bacterial/plant glycogen synthase subfamily.

The enzyme catalyses [(1-&gt;4)-alpha-D-glucosyl](n) + ADP-alpha-D-glucose = [(1-&gt;4)-alpha-D-glucosyl](n+1) + ADP + H(+). The protein operates within glycan biosynthesis; glycogen biosynthesis. Synthesizes alpha-1,4-glucan chains using ADP-glucose. The sequence is that of Glycogen synthase 1 from Bradyrhizobium diazoefficiens (strain JCM 10833 / BCRC 13528 / IAM 13628 / NBRC 14792 / USDA 110).